A 247-amino-acid polypeptide reads, in one-letter code: MQPILLLLAFLLLPRADAGEIIGGHEAKPHSRPYMAYLMIWDQKSLKRCGGFLIRDDFVLTAAHCWGSSINVTLGAHNIKEQEPTQQFIPVKRPIPHPAYNPKNFSNDIMLLQLERKAKRTRAVQPLRLPSNKAQVKPGQTCSVAGWGQTAPLGKHSHTLQEVKMTVQEDRKCESDLRHYYDSTIELCVGDPEIKKTSFKGDSGGPLVCNKVAQGIVSYGRNNGMPPRACTKVSSFVHWIKKTMKRY.

A signal peptide spans 1–18 (MQPILLLLAFLLLPRADA). Residues 19-20 (GE) constitute a propeptide, activation peptide. A Peptidase S1 domain is found at 21–245 (IIGGHEAKPH…FVHWIKKTMK (225 aa)). C49 and C65 form a disulfide bridge. H64 (charge relay system) is an active-site residue. Residues N71 and N104 are each glycosylated (N-linked (GlcNAc...) asparagine). D108 serves as the catalytic Charge relay system. 2 disulfides stabilise this stretch: C142/C209 and C173/C188. S203 functions as the Charge relay system in the catalytic mechanism.

The protein belongs to the peptidase S1 family. Granzyme subfamily.

The protein resides in the secreted. The protein localises to the cytolytic granule. The enzyme catalyses Preferential cleavage: -Asp-|-Xaa- &gt;&gt; -Asn-|-Xaa- &gt; -Met-|-Xaa-, -Ser-|-Xaa-.. Its activity is regulated as follows. Inactivated by the serine protease inhibitor diisopropylfluorophosphate. Its function is as follows. Abundant protease in the cytosolic granules of cytotoxic T-cells and NK-cells which activates caspase-independent pyroptosis when delivered into the target cell through the immunological synapse. It cleaves after Asp. Once delivered into the target cell, acts by catalyzing cleavage of gasdermin-E (GSDME), releasing the pore-forming moiety of GSDME, thereby triggering pyroptosis and target cell death. Seems to be linked to an activation cascade of caspases (aspartate-specific cysteine proteases) responsible for apoptosis execution. Cleaves caspase-3, -9 and -10 (CASP3, CASP9 and CASP10, respectively) to give rise to active enzymes mediating apoptosis. Cleaves and activates CASP7 in response to bacterial infection, promoting plasma membrane repair. In Homo sapiens (Human), this protein is Granzyme B.